Here is a 364-residue protein sequence, read N- to C-terminus: Protein MGF 360-18R (364 aa).

It belongs to the asfivirus MGF 360 family.

Its function is as follows. Plays a role in virus cell tropism, and may be required for efficient virus replication in macrophages. The protein is Protein MGF 360-18R of African swine fever virus (isolate Tick/South Africa/Pretoriuskop Pr4/1996) (ASFV).